The primary structure comprises 87 residues: Cell division topological specificity factor (87 aa).

It belongs to the MinE family.

Its function is as follows. Prevents the cell division inhibition by proteins MinC and MinD at internal division sites while permitting inhibition at polar sites. This ensures cell division at the proper site by restricting the formation of a division septum at the midpoint of the long axis of the cell. This is Cell division topological specificity factor from Acidiphilium cryptum (strain JF-5).